A 197-amino-acid chain; its full sequence is Ribonuclease HII (197 aa).

The RNase H type-2 domain maps to 3-192 (QLIAGVDEVG…VQLSLMQRGG (190 aa)). The a divalent metal cation site is built by aspartate 9, glutamate 10, and aspartate 101.

This sequence belongs to the RNase HII family. Mn(2+) serves as cofactor. The cofactor is Mg(2+).

It is found in the cytoplasm. It catalyses the reaction Endonucleolytic cleavage to 5'-phosphomonoester.. Endonuclease that specifically degrades the RNA of RNA-DNA hybrids. In Pseudoalteromonas atlantica (strain T6c / ATCC BAA-1087), this protein is Ribonuclease HII.